The following is a 474-amino-acid chain: Amidophosphoribosyltransferase (474 aa).

A propeptide spanning residues 1 to 10 is cleaved from the precursor; it reads MLGESEVRDK. Cys-11 serves as the catalytic Nucleophile. One can recognise a Glutamine amidotransferase type-2 domain in the interval 11–234; sequence CGIVGIYSQD…PGEILHLNRG (224 aa). Cys-250 contributes to the [4Fe-4S] cluster binding site. Residues Ser-297, Asp-359, and Asp-360 each coordinate Mg(2+). Positions 396, 447, and 450 each coordinate [4Fe-4S] cluster.

It in the C-terminal section; belongs to the purine/pyrimidine phosphoribosyltransferase family. It depends on Mg(2+) as a cofactor. The cofactor is [4Fe-4S] cluster.

It carries out the reaction 5-phospho-beta-D-ribosylamine + L-glutamate + diphosphate = 5-phospho-alpha-D-ribose 1-diphosphate + L-glutamine + H2O. Its pathway is purine metabolism; IMP biosynthesis via de novo pathway; N(1)-(5-phospho-D-ribosyl)glycinamide from 5-phospho-alpha-D-ribose 1-diphosphate: step 1/2. In terms of biological role, catalyzes the formation of phosphoribosylamine from phosphoribosylpyrophosphate (PRPP) and glutamine. The chain is Amidophosphoribosyltransferase from Methanothermobacter thermautotrophicus (strain ATCC 29096 / DSM 1053 / JCM 10044 / NBRC 100330 / Delta H) (Methanobacterium thermoautotrophicum).